The following is a 134-amino-acid chain: Profilin-4 (134 aa).

The protein belongs to the profilin family. As to quaternary structure, occurs in many kinds of cells as a complex with monomeric actin in a 1:1 ratio. Specifically expressed in mature and germinating pollen grains, and growing pollen tubes (at protein level).

Its subcellular location is the cytoplasm. It is found in the cytoskeleton. Its function is as follows. Binds to actin monomers and regulates the organization of the actin cytoskeleton. At high concentrations, profilin prevents the polymerization of actin, whereas it enhances it at low concentrations. At low concentrations, associates with the poly-proline motif of formins to enhance actin filament elongation rate. Acts redundantly with PRF5 to regulate apical actin polymerization at the tip of pollen tube and control polarized pollen tube growth. Functions probably by favoring formin-mediated actin polymerization at pollen tube tips. The sequence is that of Profilin-4 from Arabidopsis thaliana (Mouse-ear cress).